Here is a 244-residue protein sequence, read N- to C-terminus: Deoxynucleotide monophosphate kinase (244 aa).

Lysine 10 is a dGMP binding site. 4 residues coordinate ATP: arginine 11, glycine 13, aspartate 15, and threonine 16. DGMP-binding residues include isoleucine 36, lysine 37, arginine 70, arginine 137, glycine 144, threonine 145, valine 149, tryptophan 157, aspartate 180, arginine 182, glutamine 183, glutamate 186, and threonine 213.

This sequence belongs to the dNMP kinase family. In terms of assembly, homodimer. Mg(2+) serves as cofactor.

It carries out the reaction dTMP + ATP = dTDP + ADP. The catalysed reaction is dGMP + ATP = dGDP + ADP. It catalyses the reaction 5-hydroxymethyl-dCMP + ATP = 5-hydroxymethyl-dCDP + ADP. Functionally, allows the synthesis of deoxyribonucleoside triphosphates necessary for the rapid viral DNA replication. Phosphorylates dGMP, dTMP and 5-hydroxymethyl-dCMP (hmdCMP) while excluding dCMP and dAMP. The phosphorylation of 5-hydroxymethyl-dCMP represents the first step in the replacement of cytosine by hydroxymethylcytosine in new viral DNA genomes. The chain is Deoxynucleotide monophosphate kinase (1) from Escherichia phage RB69 (Bacteriophage RB69).